The primary structure comprises 381 residues: Creatine kinase M-type (381 aa).

One can recognise a Phosphagen kinase N-terminal domain in the interval 11-98; that stretch reads KLKFSAEEEF…FDPVIQDRHG (88 aa). Positions 99 to 118 are disordered; the sequence is GYKPTDKHRTDLNHENLKGG. Residues 125 to 367 enclose the Phosphagen kinase C-terminal domain; sequence YVLSSRVRTG…KLMVEMEKKL (243 aa). ATP is bound by residues 128–132, His-191, Arg-236, Arg-292, 320–325, and Asp-335; these read SSRVR and RGTGGV.

This sequence belongs to the ATP:guanido phosphotransferase family. In terms of assembly, dimer of identical or non-identical chains, which can be either B (brain type) or M (muscle type). With MM being the major form in skeletal muscle and myocardium, MB existing in myocardium, and BB existing in many tissues, especially brain. As to expression, predominantly found in skeletal muscle, but not in the heart.

Its subcellular location is the cytoplasm. It catalyses the reaction creatine + ATP = N-phosphocreatine + ADP + H(+). Its function is as follows. Reversibly catalyzes the transfer of phosphate between ATP and various phosphogens (e.g. creatine phosphate). Creatine kinase isoenzymes play a central role in energy transduction in tissues with large, fluctuating energy demands, such as skeletal muscle, heart, brain and spermatozoa. The protein is Creatine kinase M-type of Gallus gallus (Chicken).